Reading from the N-terminus, the 465-residue chain is Argininosuccinate lyase (465 aa).

It belongs to the lyase 1 family. Argininosuccinate lyase subfamily.

It is found in the cytoplasm. It catalyses the reaction 2-(N(omega)-L-arginino)succinate = fumarate + L-arginine. It functions in the pathway amino-acid biosynthesis; L-arginine biosynthesis; L-arginine from L-ornithine and carbamoyl phosphate: step 3/3. This Hyphomonas neptunium (strain ATCC 15444) protein is Argininosuccinate lyase.